Here is a 568-residue protein sequence, read N- to C-terminus: Light-independent protochlorophyllide reductase subunit B (568 aa).

Position 36 (D36) interacts with [4Fe-4S] cluster. Residue D293 is the Proton donor of the active site. 437-438 (GM) is a binding site for substrate. Residues 476-517 (ANGHPEAGVSVGAAEPSAAPSRSVVTEESNRATTPSSSTVHP) are disordered. Positions 498 to 515 (SVVTEESNRATTPSSSTV) are enriched in polar residues.

This sequence belongs to the ChlB/BchB/BchZ family. As to quaternary structure, protochlorophyllide reductase is composed of three subunits; BchL, BchN and BchB. Forms a heterotetramer of two BchB and two BchN subunits. [4Fe-4S] cluster is required as a cofactor.

The catalysed reaction is chlorophyllide a + oxidized 2[4Fe-4S]-[ferredoxin] + 2 ADP + 2 phosphate = protochlorophyllide a + reduced 2[4Fe-4S]-[ferredoxin] + 2 ATP + 2 H2O. Its pathway is porphyrin-containing compound metabolism; bacteriochlorophyll biosynthesis (light-independent). Component of the dark-operative protochlorophyllide reductase (DPOR) that uses Mg-ATP and reduced ferredoxin to reduce ring D of protochlorophyllide (Pchlide) to form chlorophyllide a (Chlide). This reaction is light-independent. The NB-protein (BchN-BchB) is the catalytic component of the complex. In Roseiflexus sp. (strain RS-1), this protein is Light-independent protochlorophyllide reductase subunit B.